Reading from the N-terminus, the 130-residue chain is Small ribosomal subunit protein uS9 (130 aa).

This sequence belongs to the universal ribosomal protein uS9 family.

The sequence is that of Small ribosomal subunit protein uS9 from Geobacillus sp. (strain WCH70).